The following is a 320-amino-acid chain: Apolipoprotein E (320 aa).

The signal sequence occupies residues 1–18 (MKVLWAAFLVAFLAGCQG). Repeat copies occupy residues 82 to 103 (ALMDETMKELKAYKSELEEQLS), 104 to 125 (PVAEETRARLSKELQAAQARLG), 126 to 147 (ADMEDVRSRLAQYRSEVQAMLG), 148 to 169 (QSTDELRARLASHLRKLRKRLL), 170 to 191 (RDVDDLQKRLAVYQAGAREGAE), 192 to 213 (RGVSAIRERLGPLVEQGRARAA), 214 to 236 (TVGSSLASQPLQERAQAWGERLR), and 237 to 258 (ARMEEVGSRTRDRLDEVKEQVE). Residues 82 to 199 (ALMDETMKEL…AERGVSAIRE (118 aa)) form an 8 X 22 AA approximate tandem repeats region. Position 145 is a methionine sulfoxide (Met145). Residue Ser149 is modified to Phosphoserine. An LDL and other lipoprotein receptors binding region spans residues 160–170 (HLRKLRKRLLR). Residue 164-167 (LRKR) coordinates heparin. Positions 212–293 (AATVGSSLAS…SWFEPLVEDM (82 aa)) are lipid-binding and lipoprotein association. Position 232-239 (232-239 (GERLRARM)) interacts with heparin. A homooligomerization region spans residues 269–320 (QQMRLQAEAFQARLKSWFEPLVEDMQRQWAGLVEKVQAAVGASATPVPSDNH). The specificity for association with VLDL stretch occupies residues 281-293 (RLKSWFEPLVEDM).

This sequence belongs to the apolipoprotein A1/A4/E family. In terms of assembly, homotetramer. May interact with ABCA1; functionally associated with ABCA1 in the biogenesis of HDLs. May interact with APP/A4 amyloid-beta peptide; the interaction is extremely stable in vitro but its physiological significance is unclear. May interact with MAPT. May interact with MAP2. In the cerebrospinal fluid, interacts with secreted SORL1. Interacts with PMEL; this allows the loading of PMEL luminal fragment on ILVs to induce fibril nucleation. APOE exists as multiple glycosylated and sialylated glycoforms within cells and in plasma. The extent of glycosylation and sialylation are tissue and context specific. Post-translationally, glycated in plasma VLDL. In terms of processing, phosphorylated by FAM20C in the extracellular medium.

The protein localises to the secreted. It is found in the extracellular space. It localises to the extracellular matrix. Its subcellular location is the extracellular vesicle. The protein resides in the endosome. The protein localises to the multivesicular body. Its function is as follows. APOE is an apolipoprotein, a protein associating with lipid particles, that mainly functions in lipoprotein-mediated lipid transport between organs via the plasma and interstitial fluids. APOE is a core component of plasma lipoproteins and is involved in their production, conversion and clearance. Apolipoproteins are amphipathic molecules that interact both with lipids of the lipoprotein particle core and the aqueous environment of the plasma. As such, APOE associates with chylomicrons, chylomicron remnants, very low density lipoproteins (VLDL) and intermediate density lipoproteins (IDL) but shows a preferential binding to high-density lipoproteins (HDL). It also binds a wide range of cellular receptors including the LDL receptor/LDLR, the LDL receptor-related proteins LRP1, LRP2 and LRP8 and the very low-density lipoprotein receptor/VLDLR that mediate the cellular uptake of the APOE-containing lipoprotein particles. Finally, APOE also has a heparin-binding activity and binds heparan-sulfate proteoglycans on the surface of cells, a property that supports the capture and the receptor-mediated uptake of APOE-containing lipoproteins by cells. A main function of APOE is to mediate lipoprotein clearance through the uptake of chylomicrons, VLDLs, and HDLs by hepatocytes. APOE is also involved in the biosynthesis by the liver of VLDLs as well as their uptake by peripheral tissues ensuring the delivery of triglycerides and energy storage in muscle, heart and adipose tissues. By participating in the lipoprotein-mediated distribution of lipids among tissues, APOE plays a critical role in plasma and tissues lipid homeostasis. APOE is also involved in two steps of reverse cholesterol transport, the HDLs-mediated transport of cholesterol from peripheral tissues to the liver, and thereby plays an important role in cholesterol homeostasis. First, it is functionally associated with ABCA1 in the biogenesis of HDLs in tissues. Second, it is enriched in circulating HDLs and mediates their uptake by hepatocytes. APOE also plays an important role in lipid transport in the central nervous system, regulating neuron survival and sprouting. The polypeptide is Apolipoprotein E (APOE) (Saimiri boliviensis boliviensis (Bolivian squirrel monkey)).